Consider the following 449-residue polypeptide: PC-esterase domain-containing protein 1A (449 aa).

The protein belongs to the PC-esterase family.

The sequence is that of PC-esterase domain-containing protein 1A (Pced1a) from Mus musculus (Mouse).